The chain runs to 317 residues: Neuroguidin-A (317 aa).

2 disordered regions span residues 125–170 (ENDP…SKVK) and 280–317 (SALT…RRRH). The segment covering 146–157 (DERESDSGEEGA) has biased composition (acidic residues). The segment covering 297–317 (KKSKKGPKKSKKKKGFSRRRH) has biased composition (basic residues).

Belongs to the SAS10 family. Part of the small subunit (SSU) processome, composed of more than 70 proteins and the RNA chaperone small nucleolar RNA (snoRNA) U3.

The protein localises to the nucleus. The protein resides in the nucleolus. Its subcellular location is the chromosome. It is found in the centromere. It localises to the cytoplasm. The protein localises to the cell projection. The protein resides in the axon. Its subcellular location is the dendrite. It is found in the filopodium. Functionally, part of the small subunit (SSU) processome, first precursor of the small eukaryotic ribosomal subunit. During the assembly of the SSU processome in the nucleolus, many ribosome biogenesis factors, an RNA chaperone and ribosomal proteins associate with the nascent pre-rRNA and work in concert to generate RNA folding, modifications, rearrangements and cleavage as well as targeted degradation of pre-ribosomal RNA by the RNA exosome. Its dissociation from the complex determines the transition from state pre-A1 to state pre-A1*. May inhibit mRNA translation. This Xenopus laevis (African clawed frog) protein is Neuroguidin-A (ngdn-a).